A 181-amino-acid polypeptide reads, in one-letter code: ATP-dependent protease subunit HslV (181 aa).

T9 is an active-site residue. S166, C169, and T172 together coordinate Na(+).

It belongs to the peptidase T1B family. HslV subfamily. A double ring-shaped homohexamer of HslV is capped on each side by a ring-shaped HslU homohexamer. The assembly of the HslU/HslV complex is dependent on binding of ATP.

The protein resides in the cytoplasm. The enzyme catalyses ATP-dependent cleavage of peptide bonds with broad specificity.. With respect to regulation, allosterically activated by HslU binding. Its function is as follows. Protease subunit of a proteasome-like degradation complex believed to be a general protein degrading machinery. The protein is ATP-dependent protease subunit HslV of Staphylococcus haemolyticus (strain JCSC1435).